We begin with the raw amino-acid sequence, 1013 residues long: Mediator of RNA polymerase II transcription subunit 5 (1013 aa).

Belongs to the Mediator complex subunit 5 family. Component of the Mediator complex.

Its subcellular location is the nucleus. Its function is as follows. Component of the Mediator complex, a coactivator involved in the regulated transcription of nearly all RNA polymerase II-dependent genes. Mediator functions as a bridge to convey information from gene-specific regulatory proteins to the basal RNA polymerase II transcription machinery. Mediator is recruited to promoters by direct interactions with regulatory proteins and serves as a scaffold for the assembly of a functional preinitiation complex with RNA polymerase II and the general transcription factors. The chain is Mediator of RNA polymerase II transcription subunit 5 (NUT1) from Aspergillus oryzae (strain ATCC 42149 / RIB 40) (Yellow koji mold).